A 100-amino-acid chain; its full sequence is Glutamyl-tRNA(Gln) amidotransferase subunit C (100 aa).

The protein belongs to the GatC family. Heterotrimer of A, B and C subunits.

The enzyme catalyses L-glutamyl-tRNA(Gln) + L-glutamine + ATP + H2O = L-glutaminyl-tRNA(Gln) + L-glutamate + ADP + phosphate + H(+). The catalysed reaction is L-aspartyl-tRNA(Asn) + L-glutamine + ATP + H2O = L-asparaginyl-tRNA(Asn) + L-glutamate + ADP + phosphate + 2 H(+). Allows the formation of correctly charged Asn-tRNA(Asn) or Gln-tRNA(Gln) through the transamidation of misacylated Asp-tRNA(Asn) or Glu-tRNA(Gln) in organisms which lack either or both of asparaginyl-tRNA or glutaminyl-tRNA synthetases. The reaction takes place in the presence of glutamine and ATP through an activated phospho-Asp-tRNA(Asn) or phospho-Glu-tRNA(Gln). In Streptococcus pyogenes serotype M1, this protein is Glutamyl-tRNA(Gln) amidotransferase subunit C.